The chain runs to 279 residues: Methyltransferase prhM (279 aa).

Residues aspartate 124 to isoleucine 125 and aspartate 152 to valine 153 each bind S-adenosyl-L-methionine.

This sequence belongs to the class I-like SAM-binding methyltransferase superfamily.

Its pathway is secondary metabolite biosynthesis; terpenoid biosynthesis. In terms of biological role, methyltransferase; part of the gene cluster that mediates the biosynthesis of paraherquonin, a meroterpenoid with a unique, highly congested hexacyclic molecular architecture. The first step of the pathway is the synthesis of 3,5-dimethylorsellinic acid (DMOA) by the polyketide synthase prhL. Synthesis of DMOA is followed by farnesylation by the prenyltransferase prhE, methylesterification by the methyl-transferase prhM, epoxidation of the prenyl chain by the flavin-dependent monooxygenase prhF, and cyclization of the farnesyl moiety by the terpene cyclase prhH, to yield the tetracyclic intermediate, protoaustinoid A. The short chain dehydrogenase prhI then oxidizes the C-3 alcohol group of the terpene cyclase product to transform protoaustinoid A into protoaustinoid B. The FAD-binding monooxygenase prhJ catalyzes the oxidation of protoaustinoid B into preaustinoid A which is further oxidized into preaustinoid A1 by FAD-binding monooxygenase phrK. Finally, prhA leads to berkeleydione via the berkeleyone B intermediate. PrhA is a multifunctional dioxygenase that first desaturates at C5-C6 to form berkeleyone B, followed by rearrangement of the A/B-ring to form the cycloheptadiene moiety in berkeleydione. Berkeleydione serves as the key intermediate for the biosynthesis of paraherquonin as well as many other meroterpenoids. The cytochrome P450 monooxygenases prhB, prhD, and prhN, as well as the isomerase prhC, are probably involved in the late stage of paraherquonin biosynthesis, after the production of berkeleydione. Especially prhC might be a multifunctional enzyme that catalyzes the D-ring expansion via intramolecular methoxy rearrangement, as well as the hydrolysis of the expanded D-ring. This chain is Methyltransferase prhM, found in Penicillium brasilianum.